The sequence spans 830 residues: Cadherin-16 (830 aa).

The N-terminal stretch at 1–21 (MISARPWLLYLSVIQAFTTEA) is a signal peptide. Over 22 to 788 (QPAESLHTEV…MKGMPTKLSA (767 aa)) the chain is Extracellular. Cadherin domains are found at residues 27–128 (LHTE…VPQF), 133–237 (YRAQ…SIVE), 244–338 (EPVH…APVC), 343–451 (PTVN…APEF), 457–566 (GPVT…PLKL), and 571–667 (YETS…VPAL). Residues N519, N604, and N724 are each glycosylated (N-linked (GlcNAc...) asparagine). The ectodomain G stretch occupies residues 668–788 (TLSAGPSRHL…MKGMPTKLSA (121 aa)). The helical transmembrane segment at 789 to 809 (VGVLLGTLAAIGFILILVFTH) threads the bilayer. At 810 to 830 (LALARKDLDQPADSVPLKAAV) the chain is on the cytoplasmic side. The residue at position 823 (S823) is a Phosphoserine.

Kidney specific.

The protein localises to the cell membrane. Cadherins are calcium-dependent cell adhesion proteins. They preferentially interact with themselves in a homophilic manner in connecting cells; cadherins may thus contribute to the sorting of heterogeneous cell types. This chain is Cadherin-16 (Cdh16), found in Mus musculus (Mouse).